The chain runs to 60 residues: Large ribosomal subunit protein bL32 (60 aa).

This sequence belongs to the bacterial ribosomal protein bL32 family.

This is Large ribosomal subunit protein bL32 from Streptococcus gordonii (strain Challis / ATCC 35105 / BCRC 15272 / CH1 / DL1 / V288).